Here is a 349-residue protein sequence, read N- to C-terminus: Ribosomal RNA large subunit methyltransferase Cfr (349 aa).

The Proton acceptor role is filled by Glu89. The 236-residue stretch at 96–331 folds into the Radical SAM core domain; it reads KAGWESFCIS…VTVRSQFGID (236 aa). Cys103 and Cys336 are joined by a disulfide. [4Fe-4S] cluster-binding residues include Cys110, Cys114, and Cys117. Residues 156-157, Ser187, 210-212, and Asn291 each bind S-adenosyl-L-methionine; these read GE and SLH. The active-site S-methylcysteine intermediate is Cys336.

The protein belongs to the radical SAM superfamily. RlmN family. Cfr subfamily. The cofactor is [4Fe-4S] cluster.

Its subcellular location is the cytoplasm. It catalyses the reaction adenosine(2503) in 23S rRNA + 2 reduced [2Fe-2S]-[ferredoxin] + 2 S-adenosyl-L-methionine = 8-methyladenosine(2503) in 23S rRNA + 5'-deoxyadenosine + L-methionine + 2 oxidized [2Fe-2S]-[ferredoxin] + S-adenosyl-L-homocysteine. Its function is as follows. Specifically methylates position 8 of adenine 2503 in 23S rRNA. Confers resistance to some classes of antibiotics. The sequence is that of Ribosomal RNA large subunit methyltransferase Cfr from Bacillus velezensis (strain DSM 23117 / BGSC 10A6 / LMG 26770 / FZB42) (Bacillus amyloliquefaciens subsp. plantarum).